A 562-amino-acid chain; its full sequence is tRNA (guanine(37)-N(1))-methyltransferase (562 aa).

The N-terminal 41 residues, 1-41 (MLFRRFLNLTTKTPHLQTFRARHYFRNMSCPELIPPPTVRG), are a transit peptide targeting the mitochondrion. Residues His-243, 281-282 (DL), and Asn-340 contribute to the S-adenosyl-L-methionine site. Residues 523–534 (AHIVAKKPEKKP) are compositionally biased toward basic and acidic residues. The tract at residues 523–562 (AHIVAKKPEKKPLPAKPASKKNKNQANTKQVEAGLDKMQM) is disordered.

It belongs to the class I-like SAM-binding methyltransferase superfamily. TRM5/TYW2 family. As to quaternary structure, monomer.

It is found in the mitochondrion matrix. The protein resides in the nucleus. It localises to the cytoplasm. The catalysed reaction is guanosine(37) in tRNA + S-adenosyl-L-methionine = N(1)-methylguanosine(37) in tRNA + S-adenosyl-L-homocysteine + H(+). Its function is as follows. Specifically methylates the N1 position of guanosine-37 in various cytoplasmic and mitochondrial tRNAs. Methylation is not dependent on the nature of the nucleoside 5' of the target nucleoside. This is the first step in the biosynthesis of wybutosine (yW), a modified base adjacent to the anticodon of tRNAs and required for accurate decoding. This is tRNA (guanine(37)-N(1))-methyltransferase from Aedes aegypti (Yellowfever mosquito).